A 226-amino-acid chain; its full sequence is MKLTFLGHAVLLISDIEGKYNVIIDPFITGNPAYPKDFQLPKIDYIMVTHGHGDHLGDTVELCKKYNSTVISNFEICNYLQLKGCKIHPMHVGGVYYFEFGKVKLTPAIHGSGIHEGDKVLYGGNPCGFLIKVEGKNIYHAGDTGLTKEFELLKDIDVAFLPIGGNFVMDVEDALVALEMIKPKIVVPIHYNTWDIIKADEQKFKEGAEKLGIKCVILKPGESLEI.

It belongs to the UPF0173 family.

The sequence is that of UPF0173 metal-dependent hydrolase Fnod_0635 from Fervidobacterium nodosum (strain ATCC 35602 / DSM 5306 / Rt17-B1).